Consider the following 203-residue polypeptide: Endo-type membrane-bound lytic murein transglycosylase A (203 aa).

A signal peptide spans 1–15; sequence MKLRWFAFLIVLLAG. Cys-16 carries N-palmitoyl cysteine lipidation. A lipid anchor (S-diacylglycerol cysteine) is attached at Cys-16.

It belongs to the transglycosylase Slt family.

It localises to the cell outer membrane. The enzyme catalyses Endolytic cleavage of the (1-&gt;4)-beta-glycosidic linkage between N-acetylmuramic acid (MurNAc) and N-acetylglucosamine (GlcNAc) residues in peptidoglycan with concomitant formation of a 1,6-anhydrobond in the MurNAc residue.. Functionally, murein-degrading enzyme. May play a role in recycling of muropeptides during cell elongation and/or cell division. Preferentially cleaves at a distance of more than two disaccharide units from the ends of the glycan chain. This chain is Endo-type membrane-bound lytic murein transglycosylase A, found in Escherichia coli O127:H6 (strain E2348/69 / EPEC).